The sequence spans 372 residues: Alanine racemase (372 aa).

Lysine 33 (proton acceptor; specific for D-alanine) is an active-site residue. An N6-(pyridoxal phosphate)lysine modification is found at lysine 33. Substrate is bound at residue arginine 131. Tyrosine 261 serves as the catalytic Proton acceptor; specific for L-alanine. Methionine 309 is a substrate binding site.

It belongs to the alanine racemase family. Pyridoxal 5'-phosphate is required as a cofactor.

The enzyme catalyses L-alanine = D-alanine. The protein operates within amino-acid biosynthesis; D-alanine biosynthesis; D-alanine from L-alanine: step 1/1. Catalyzes the interconversion of L-alanine and D-alanine. May also act on other amino acids. This chain is Alanine racemase (alr), found in Salinispora tropica (strain ATCC BAA-916 / DSM 44818 / JCM 13857 / NBRC 105044 / CNB-440).